Reading from the N-terminus, the 239-residue chain is Purine nucleoside phosphorylase DeoD-type (239 aa).

His-5 serves as a coordination point for a purine D-ribonucleoside. Phosphate-binding positions include Gly-21, Arg-25, Arg-44, and 89–92; that span reads RVGS. A purine D-ribonucleoside is bound by residues 180–182 and 204–205; these read EME and SD. Residue Asp-205 is the Proton donor of the active site.

It belongs to the PNP/UDP phosphorylase family. As to quaternary structure, homohexamer; trimer of homodimers.

The catalysed reaction is a purine D-ribonucleoside + phosphate = a purine nucleobase + alpha-D-ribose 1-phosphate. It catalyses the reaction a purine 2'-deoxy-D-ribonucleoside + phosphate = a purine nucleobase + 2-deoxy-alpha-D-ribose 1-phosphate. Its function is as follows. Catalyzes the reversible phosphorolytic breakdown of the N-glycosidic bond in the beta-(deoxy)ribonucleoside molecules, with the formation of the corresponding free purine bases and pentose-1-phosphate. This chain is Purine nucleoside phosphorylase DeoD-type, found in Klebsiella pneumoniae.